The chain runs to 394 residues: MADKKNEDFVVRMPDNGTVEKEPFLARSPPARARTGSGGGFGDSFSLARVANNPPAAILAYCLSSISMTVVNKYVVSGSEWNLNFFYLAVQAIVCIIAILFCKQIGIITNLAPFDNVKAKKWFPVSLLLVGMIYTSTKALQFLSVPVYTIFKNLTIIAIAYGEVLWFGGSVSPLALVSFGLMVLSSVVAAWADIQSAIHGGSHPSEASTAISTLNAGYAWMGMNVFCSAAYLLGMRKVIHKMNFKDWDSMFYNNLLTIPVLIVCSLIAEDWSAANLARNFPIESRNALFIGMIYSGLGAIFISYCSAWCIRVTTSTTYSMVGALNKLPIAISGLVFFSAPVTFGSVSAIVIGFISGIVYAWAKARQSSQAKSALPTQQPVMSASSQSNKDASNS.

Residues 1–55 (MADKKNEDFVVRMPDNGTVEKEPFLARSPPARARTGSGGGFGDSFSLARVANNPP) lie on the Cytoplasmic side of the membrane. The chain crosses the membrane as a helical span at residues 56 to 76 (AAILAYCLSSISMTVVNKYVV). Over 77-80 (SGSE) the chain is Lumenal. The helical transmembrane segment at 81–101 (WNLNFFYLAVQAIVCIIAILF) threads the bilayer. Topologically, residues 102–121 (CKQIGIITNLAPFDNVKAKK) are cytoplasmic. A helical transmembrane segment spans residues 122-144 (WFPVSLLLVGMIYTSTKALQFLS). The Lumenal portion of the chain corresponds to 145-149 (VPVYT). A helical transmembrane segment spans residues 150–167 (IFKNLTIIAIAYGEVLWF). The Cytoplasmic portion of the chain corresponds to 168–173 (GGSVSP). A helical transmembrane segment spans residues 174-198 (LALVSFGLMVLSSVVAAWADIQSAI). Topologically, residues 199 to 213 (HGGSHPSEASTAIST) are lumenal. Residues 214–234 (LNAGYAWMGMNVFCSAAYLLG) traverse the membrane as a helical segment. The Cytoplasmic segment spans residues 235-246 (MRKVIHKMNFKD). A helical transmembrane segment spans residues 247-267 (WDSMFYNNLLTIPVLIVCSLI). The Lumenal portion of the chain corresponds to 268 to 287 (AEDWSAANLARNFPIESRNA). Residues 288 to 308 (LFIGMIYSGLGAIFISYCSAW) traverse the membrane as a helical segment. Residues 309-316 (CIRVTTST) are Cytoplasmic-facing. A helical transmembrane segment spans residues 317-339 (TYSMVGALNKLPIAISGLVFFSA). Residues 340-342 (PVT) lie on the Lumenal side of the membrane. A helical membrane pass occupies residues 343-362 (FGSVSAIVIGFISGIVYAWA). Topologically, residues 363-394 (KARQSSQAKSALPTQQPVMSASSQSNKDASNS) are cytoplasmic. The interval 371–394 (KSALPTQQPVMSASSQSNKDASNS) is disordered. Over residues 374 to 394 (LPTQQPVMSASSQSNKDASNS) the composition is skewed to polar residues.

The protein belongs to the TPT transporter family. SLC35D subfamily. As to quaternary structure, homooligomer.

It localises to the golgi apparatus membrane. The protein resides in the cytoplasmic vesicle membrane. It is found in the endoplasmic reticulum membrane. Functionally, involved in the import of GDP-mannose from the cytoplasm into the Golgi lumen. This Pyricularia oryzae (strain 70-15 / ATCC MYA-4617 / FGSC 8958) (Rice blast fungus) protein is GDP-mannose transporter (VRG4).